Here is a 265-residue protein sequence, read N- to C-terminus: Hydroxyethylthiazole kinase (265 aa).

Met-43 is a substrate binding site. ATP contacts are provided by Arg-119 and Ser-165. Substrate is bound at residue Ala-192.

The protein belongs to the Thz kinase family. Mg(2+) serves as cofactor.

It carries out the reaction 5-(2-hydroxyethyl)-4-methylthiazole + ATP = 4-methyl-5-(2-phosphooxyethyl)-thiazole + ADP + H(+). The protein operates within cofactor biosynthesis; thiamine diphosphate biosynthesis; 4-methyl-5-(2-phosphoethyl)-thiazole from 5-(2-hydroxyethyl)-4-methylthiazole: step 1/1. Functionally, catalyzes the phosphorylation of the hydroxyl group of 4-methyl-5-beta-hydroxyethylthiazole (THZ). The sequence is that of Hydroxyethylthiazole kinase from Haemophilus influenzae (strain ATCC 51907 / DSM 11121 / KW20 / Rd).